The following is a 92-amino-acid chain: UPF0223 protein SSA_0938 (92 aa).

Belongs to the UPF0223 family.

The chain is UPF0223 protein SSA_0938 from Streptococcus sanguinis (strain SK36).